The following is a 77-amino-acid chain: Conotoxin Vc6.14 (77 aa).

An N-terminal signal peptide occupies residues 1 to 19 (MEKLTILLLVAAVLMSTQA). Positions 20 to 37 (MFQGGGEKRPKDKIKFLS) are excised as a propeptide. Cystine bridges form between C51/C65, C58/C69, and C64/C74.

It belongs to the conotoxin O2 superfamily. As to expression, expressed by the venom duct.

It localises to the secreted. Its function is as follows. Inhibits voltage-gated ion channels. The chain is Conotoxin Vc6.14 from Conus victoriae (Queen Victoria cone).